The following is a 334-amino-acid chain: 4-hydroxy-2-methyl-3-oxo-4-farnesyl-3,4-dihydroquinoline-1-oxide ketoreductase (334 aa).

Catalysis depends on Y139, which acts as the Proton donor.

Belongs to the 3-beta-HSD family.

The enzyme catalyses aurachin B + NAD(+) + H2O = 4-hydroxy-2-methyl-3-oxo-4-[(2E,6E)-farnesyl]-3,4-dihydroquinoline 1-oxide + NADH. It carries out the reaction 3,4-dihydroxy-2-methyl-4-[(2E,6E)-farnesyl]-3,4-dihydroquinoline 1-oxide + NAD(+) = 4-hydroxy-2-methyl-3-oxo-4-[(2E,6E)-farnesyl]-3,4-dihydroquinoline 1-oxide + NADH + H(+). Its function is as follows. Ketoreductase that catalyzes the final step in the conversion of aurachin C to aurachin B. Catalyzes the reduction of 4-hydroxy-2-methyl-3-oxo-4-[(2E,6E)-farnesyl]-3,4-dihydroquinoline-1-oxide to form 3,4-dihydroxy-2-methyl-4-[(2E,6E)-farnesyl]-3,4-dihydroquinoline 1-oxide, which then undergoes a spontaneous dehydration to form aurachin B. Accepts both NADH and NADPH, but has a preference for NADH. The chain is 4-hydroxy-2-methyl-3-oxo-4-farnesyl-3,4-dihydroquinoline-1-oxide ketoreductase from Stigmatella aurantiaca.